We begin with the raw amino-acid sequence, 158 residues long: MATFEGTYNDNTQALKLAIVIGRFNDLVTSKLLAGCQDCLRRHGVNTDPEGAQIDYIWVPGCFEISLVAKKLADSGKYDAIICLGAVIRGDTPHFDYVAAEVSKGVAAAAFQTGVPVIFGVLTTDTMQQALERAGIKNNLGWGYALSALEMASLMGKI.

Residues phenylalanine 24, 62–64 (CFE), and 86–88 (AVI) each bind 5-amino-6-(D-ribitylamino)uracil. Residue 91-92 (DT) participates in (2S)-2-hydroxy-3-oxobutyl phosphate binding. Histidine 94 functions as the Proton donor in the catalytic mechanism. Phenylalanine 119 serves as a coordination point for 5-amino-6-(D-ribitylamino)uracil. Residue arginine 133 participates in (2S)-2-hydroxy-3-oxobutyl phosphate binding.

The protein belongs to the DMRL synthase family.

It carries out the reaction (2S)-2-hydroxy-3-oxobutyl phosphate + 5-amino-6-(D-ribitylamino)uracil = 6,7-dimethyl-8-(1-D-ribityl)lumazine + phosphate + 2 H2O + H(+). It participates in cofactor biosynthesis; riboflavin biosynthesis; riboflavin from 2-hydroxy-3-oxobutyl phosphate and 5-amino-6-(D-ribitylamino)uracil: step 1/2. In terms of biological role, catalyzes the formation of 6,7-dimethyl-8-ribityllumazine by condensation of 5-amino-6-(D-ribitylamino)uracil with 3,4-dihydroxy-2-butanone 4-phosphate. This is the penultimate step in the biosynthesis of riboflavin. In Picosynechococcus sp. (strain ATCC 27264 / PCC 7002 / PR-6) (Agmenellum quadruplicatum), this protein is 6,7-dimethyl-8-ribityllumazine synthase.